The primary structure comprises 550 residues: Methionine--tRNA ligase (550 aa).

The 'HIGH' region signature appears at 13-23; sequence PYANGPLHFGH. Zn(2+) contacts are provided by C145, C148, C158, and C161. Positions 331 to 335 match the 'KMSKS' region motif; the sequence is QFSKS. K334 serves as a coordination point for ATP.

It belongs to the class-I aminoacyl-tRNA synthetase family. MetG type 1 subfamily. In terms of assembly, monomer. Zn(2+) serves as cofactor.

It localises to the cytoplasm. It carries out the reaction tRNA(Met) + L-methionine + ATP = L-methionyl-tRNA(Met) + AMP + diphosphate. Its function is as follows. Is required not only for elongation of protein synthesis but also for the initiation of all mRNA translation through initiator tRNA(fMet) aminoacylation. This chain is Methionine--tRNA ligase (metG), found in Chlamydia muridarum (strain MoPn / Nigg).